Here is a 556-residue protein sequence, read N- to C-terminus: Phenylalanine--tRNA ligase beta subunit (556 aa).

The B5 domain maps to 274 to 349; it reads HEPEEMEVDL…ITLGLNKIGY (76 aa). Mg(2+) is bound by residues Asp-327, Asp-333, Glu-336, and Glu-337.

Belongs to the phenylalanyl-tRNA synthetase beta subunit family. Type 2 subfamily. In terms of assembly, tetramer of two alpha and two beta subunits. Requires Mg(2+) as cofactor.

It localises to the cytoplasm. It catalyses the reaction tRNA(Phe) + L-phenylalanine + ATP = L-phenylalanyl-tRNA(Phe) + AMP + diphosphate + H(+). The chain is Phenylalanine--tRNA ligase beta subunit from Korarchaeum cryptofilum (strain OPF8).